The primary structure comprises 579 residues: Peptidyl-prolyl cis-trans isomerase-like 2 (579 aa).

The U-box domain occupies 42–115 (RRLPFNFCSL…GEYVDPVTYK (74 aa)). Positions 227-261 (AERAQRAESGAASKGLTKPGMSATAASQKTVSHQA) are disordered. Over residues 250-259 (TAASQKTVSH) the composition is skewed to polar residues. A PPIase cyclophilin-type domain is found at 311 to 470 (QKGYARISTT…PDIRIKDVTI (160 aa)). The interval 555 to 579 (EGPEPEPAKKKFKGGGGFGDFSSWD) is disordered.

Belongs to the cyclophilin-type PPIase family. PPIL2 subfamily.

Its subcellular location is the nucleus. The enzyme catalyses [protein]-peptidylproline (omega=180) = [protein]-peptidylproline (omega=0). The catalysed reaction is S-ubiquitinyl-[E2 ubiquitin-conjugating enzyme]-L-cysteine + [acceptor protein]-L-lysine = [E2 ubiquitin-conjugating enzyme]-L-cysteine + N(6)-ubiquitinyl-[acceptor protein]-L-lysine.. The protein operates within protein modification; protein ubiquitination. In terms of biological role, may catalyze the cis-trans isomerization of proline imidic peptide bonds in oligopeptides thereby assisting the folding of proteins. May also function as a chaperone, playing a role in intracellular transport of proteins. May also have a protein ubiquitin ligase activity acting as an E3 ubiquitin protein ligase or as a ubiquitin-ubiquitin ligase promoting elongation of ubiquitin chains on proteins. This chain is Peptidyl-prolyl cis-trans isomerase-like 2 (cyp8), found in Aspergillus fumigatus (strain ATCC MYA-4609 / CBS 101355 / FGSC A1100 / Af293) (Neosartorya fumigata).